Reading from the N-terminus, the 272-residue chain is Putative imidazole glycerol phosphate synthase subunit hisF2 (272 aa).

The active site involves Asp-133.

This sequence belongs to the HisA/HisF family. Heterodimer of HisH and HisF.

The protein localises to the cytoplasm. The catalysed reaction is 5-[(5-phospho-1-deoxy-D-ribulos-1-ylimino)methylamino]-1-(5-phospho-beta-D-ribosyl)imidazole-4-carboxamide + L-glutamine = D-erythro-1-(imidazol-4-yl)glycerol 3-phosphate + 5-amino-1-(5-phospho-beta-D-ribosyl)imidazole-4-carboxamide + L-glutamate + H(+). It functions in the pathway amino-acid biosynthesis; L-histidine biosynthesis; L-histidine from 5-phospho-alpha-D-ribose 1-diphosphate: step 5/9. Functionally, IGPS catalyzes the conversion of PRFAR and glutamine to IGP, AICAR and glutamate. The HisF subunit catalyzes the cyclization activity that produces IGP and AICAR from PRFAR using the ammonia provided by the HisH subunit. This chain is Putative imidazole glycerol phosphate synthase subunit hisF2 (hisF2), found in Vibrio vulnificus (strain YJ016).